We begin with the raw amino-acid sequence, 175 residues long: NADH-quinone oxidoreductase subunit I (175 aa).

2 consecutive 4Fe-4S ferredoxin-type domains span residues 69 to 98 and 115 to 144; these read KRDEQGRERCTACFCCMWICPANAIHIEAA and KKFEINLLRCIFCGLCEEACPKGAIYLDGT. The [4Fe-4S] cluster site is built by cysteine 78, cysteine 81, cysteine 84, cysteine 88, cysteine 124, cysteine 127, cysteine 130, and cysteine 134.

The protein belongs to the complex I 23 kDa subunit family. NDH-1 is composed of 14 different subunits. Subunits NuoA, H, J, K, L, M, N constitute the membrane sector of the complex. [4Fe-4S] cluster is required as a cofactor.

It localises to the cell inner membrane. The enzyme catalyses a quinone + NADH + 5 H(+)(in) = a quinol + NAD(+) + 4 H(+)(out). Functionally, NDH-1 shuttles electrons from NADH, via FMN and iron-sulfur (Fe-S) centers, to quinones in the respiratory chain. The immediate electron acceptor for the enzyme in this species is believed to be ubiquinone. Couples the redox reaction to proton translocation (for every two electrons transferred, four hydrogen ions are translocated across the cytoplasmic membrane), and thus conserves the redox energy in a proton gradient. The chain is NADH-quinone oxidoreductase subunit I from Leptospira biflexa serovar Patoc (strain Patoc 1 / Ames).